We begin with the raw amino-acid sequence, 547 residues long: Oncoprotein-induced transcript 3 protein (547 aa).

The signal sequence occupies residues 1–19 (MPQLLLLACLLIIVTRVAP). Residues Asn-89 and Asn-116 are each glycosylated (N-linked (GlcNAc...) asparagine). Residues 182-222 (DENECEQNNGGCSEICVNLKNSYRCECGIGRVLRSDGKTCE) enclose the EGF-like; calcium-binding domain. Intrachain disulfides connect Cys-186–Cys-197, Cys-193–Cys-206, and Cys-208–Cys-221. One can recognise a ZP domain in the interval 267–516 (FCKSNTIEVS…SRCAQGCHRR (250 aa)). Asn-299 carries N-linked (GlcNAc...) asparagine glycosylation. A disordered region spans residues 520-547 (EASTEGEDASGPRSQMLTGGPISIDWED).

It localises to the nucleus envelope. Functionally, may be involved in hepatocellular function and development. This Bos taurus (Bovine) protein is Oncoprotein-induced transcript 3 protein (OIT3).